The sequence spans 183 residues: Ras-related protein Rap-2c (183 aa).

A GTP-binding site is contributed by 10–17 (GSGGVGKS). Positions 32–40 (YDPTIEDFY) match the Effector region motif. Residues 57–61 (DTAGT) and 116–119 (NKVD) each bind GTP. S-palmitoyl cysteine attachment occurs at residues Cys176 and Cys177. Cysteine methyl ester is present on Cys180. A lipid anchor (S-geranylgeranyl cysteine) is attached at Cys180. Residues 181–183 (VVQ) constitute a propeptide, removed in mature form.

It belongs to the small GTPase superfamily. Ras family. Palmitoylated. Palmitoylation is required for association with recycling endosome membranes and activation of TNIK.

It localises to the cytoplasm. The protein resides in the recycling endosome membrane. The enzyme catalyses GTP + H2O = GDP + phosphate + H(+). Small GTP-binding protein which cycles between a GDP-bound inactive and a GTP-bound active form. May play a role in cytoskeletal rearrangements and regulate cell spreading through activation of the effector TNIK. May play a role in SRE-mediated gene transcription. In Bos taurus (Bovine), this protein is Ras-related protein Rap-2c (RAP2C).